Consider the following 280-residue polypeptide: Ribonuclease P protein subunit p38 (280 aa).

At Ala2 the chain carries N-acetylalanine. Phosphoserine is present on residues Ser12, Ser221, and Ser230. Positions 202 to 227 (WLPDRTQGPTDSLETEPSESQDNEIL) are disordered. Acidic residues predominate over residues 214–226 (LETEPSESQDNEI). Positions 254–280 (QPLKIKKLIPNPSKIRKPPKSKKSISK) are disordered. Residues 267–280 (KIRKPPKSKKSISK) show a composition bias toward basic residues.

It belongs to the eukaryotic ribosomal protein eL8 family. Component of nuclear RNase P and RNase MRP ribonucleoproteins. RNase P consists of a catalytic RNA moiety and about 10 protein subunits; POP1, POP4, POP5, POP7, RPP14, RPP21, RPP25, RPP30, RPP38 and RPP40. Within the RNase P complex, POP1, POP7 and RPP25 form the 'finger' subcomplex, POP5, RPP14, RPP40 and homodimeric RPP30 form the 'palm' subcomplex, and RPP21, POP4 and RPP38 form the 'wrist' subcomplex. All subunits of the RNase P complex interact with the catalytic RNA. Several subunits of RNase P are also part of the RNase MRP complex. RNase MRP consists of a catalytic RNA moiety and about 8 protein subunits; POP1, POP7, RPP25, RPP30, RPP38, RPP40 and possibly also POP4 and POP5.

Its subcellular location is the nucleus. The protein resides in the nucleolus. Functionally, component of ribonuclease P, a ribonucleoprotein complex that generates mature tRNA molecules by cleaving their 5'-ends. Also a component of the MRP ribonuclease complex, which cleaves pre-rRNA sequences. This is Ribonuclease P protein subunit p38 (Rpp38) from Mus musculus (Mouse).